A 188-amino-acid chain; its full sequence is Sec-independent protein translocase protein TatB (188 aa).

Residues 1-21 (MFDIGWSELVVIGVVALVAIG) form a helical membrane-spanning segment. The tract at residues 147–188 (LPVPAETHALATTDLAPPDLAHPAPAHPEPTNSEPAKDAKAS) is disordered. Residues 160-170 (DLAPPDLAHPA) are compositionally biased toward low complexity.

This sequence belongs to the TatB family. In terms of assembly, the Tat system comprises two distinct complexes: a TatABC complex, containing multiple copies of TatA, TatB and TatC subunits, and a separate TatA complex, containing only TatA subunits. Substrates initially bind to the TatABC complex, which probably triggers association of the separate TatA complex to form the active translocon.

It is found in the cell inner membrane. In terms of biological role, part of the twin-arginine translocation (Tat) system that transports large folded proteins containing a characteristic twin-arginine motif in their signal peptide across membranes. Together with TatC, TatB is part of a receptor directly interacting with Tat signal peptides. TatB may form an oligomeric binding site that transiently accommodates folded Tat precursor proteins before their translocation. This Rhodopseudomonas palustris (strain HaA2) protein is Sec-independent protein translocase protein TatB.